The chain runs to 615 residues: Protein DBF4 homolog B (615 aa).

The BRCT domain occupies 43–133 (ARKHPFSGKS…DPKGSHPRPS (91 aa)). 2 disordered regions span residues 93–141 (REVK…DSVP) and 264–293 (FEAP…AHTM). Positions 275-284 (HTRESKDGEP) are enriched in basic and acidic residues. The DBF4-type zinc finger occupies 294–343 (PRRKKGYCECCQEAFEELHVHLQSAQHRSFALEAHLYAEVDRIIAQLSHS). Residues Cys301, Cys304, His314, and His320 each coordinate Zn(2+). The interval 371–407 (TLHPHQPSHPRAASPRIRKEDSCQASVTQGRAAGQQR) is disordered.

In terms of assembly, forms a complex with CDC7. Note that CDC7 forms distinct complex either with DBF4/DBF4A or DBF4B. Such complexes are stable upon replication stress. Post-translationally, phosphorylated. As to expression, widely expressed. Highly expressed in testis.

The protein resides in the nucleus. Functionally, regulatory subunit for CDC7 which activates its kinase activity thereby playing a central role in DNA replication and cell proliferation. Required for progression of S and M phases. The complex CDC7-DBF4B selectively phosphorylates MCM2 subunit at 'Ser-40' and then is involved in regulating the initiation of DNA replication during cell cycle. This is Protein DBF4 homolog B (DBF4B) from Homo sapiens (Human).